Consider the following 1353-residue polypeptide: DNA-directed RNA polymerase subunit beta' (1353 aa).

Residues 1–117 (MSDNRLFTSV…AFQKLNDLFK (117 aa)) form a unknown region. A DNA-directed RNA polymerase subunit beta' region spans residues 118–1353 (LYNHFPSISS…SELAEKTNQN (1236 aa)). Positions 189, 191, 203, and 206 each coordinate Zn(2+). Positions 578, 580, and 582 each coordinate Mg(2+).

Belongs to the RNA polymerase beta' chain family. In terms of assembly, the RNAP catalytic core consists of 2 alpha, 1 beta, 1 beta' and 1 omega subunit. When a sigma factor is associated with the core the holoenzyme is formed, which can initiate transcription. It depends on Mg(2+) as a cofactor. Requires Zn(2+) as cofactor.

The catalysed reaction is RNA(n) + a ribonucleoside 5'-triphosphate = RNA(n+1) + diphosphate. Functionally, DNA-dependent RNA polymerase catalyzes the transcription of DNA into RNA using the four ribonucleoside triphosphates as substrates. This Onion yellows phytoplasma (strain OY-M) protein is DNA-directed RNA polymerase subunit beta'.